Reading from the N-terminus, the 363-residue chain is 3-dehydroquinate synthase (363 aa).

NAD(+) is bound by residues 134-135, lysine 147, and lysine 156; that span reads TT. The Zn(2+) site is built by glutamate 189, histidine 254, and histidine 271.

The protein belongs to the sugar phosphate cyclases superfamily. Dehydroquinate synthase family. Requires Co(2+) as cofactor. Zn(2+) serves as cofactor. The cofactor is NAD(+).

The protein localises to the cytoplasm. It catalyses the reaction 7-phospho-2-dehydro-3-deoxy-D-arabino-heptonate = 3-dehydroquinate + phosphate. It participates in metabolic intermediate biosynthesis; chorismate biosynthesis; chorismate from D-erythrose 4-phosphate and phosphoenolpyruvate: step 2/7. Its function is as follows. Catalyzes the conversion of 3-deoxy-D-arabino-heptulosonate 7-phosphate (DAHP) to dehydroquinate (DHQ). This is 3-dehydroquinate synthase from Prochlorococcus marinus (strain AS9601).